A 412-amino-acid chain; its full sequence is Mannose-1-phosphate guanylyltransferase regulatory subunit alpha (412 aa).

Residues 6–259 (TKAIILVGGP…VGFWRQIKNA (254 aa)) form a substrate-binding domain region. Positions 88 and 255 each coordinate GDP-alpha-D-mannose. Residues 281–412 (LKKGNNIIGN…DRNYNNEIIL (132 aa)) are hexapeptide repeat domain.

Belongs to the transferase hexapeptide repeat family. Component of the GMPPA-GMPPB mannose-1-phosphate guanylyltransferase complex composed of 4 gmppA subunits and 8 gmppB subunits; the complex is organized into three layers, a central layer made up of 2 gmppA dimers sandwiched between two layers each made up of 2 gmppB dimers.

In terms of biological role, regulatory subunit of the GMPPA-GMPPB mannose-1-phosphate guanylyltransferase complex; reduces the catalytic activity of GMPPB when part of the complex. Mediates allosteric feedback inhibition of GMPPB catalytic activity upon binding GDP-alpha-D-mannose. Together with GMPPB regulates GDP-alpha-D-mannose levels. This Dictyostelium discoideum (Social amoeba) protein is Mannose-1-phosphate guanylyltransferase regulatory subunit alpha (gmppA).